We begin with the raw amino-acid sequence, 88 residues long: Small ribosomal subunit protein uS15c (88 aa).

Belongs to the universal ribosomal protein uS15 family. In terms of assembly, part of the 30S ribosomal subunit.

The protein localises to the plastid. The protein resides in the chloroplast. This is Small ribosomal subunit protein uS15c (rps15) from Calycanthus floridus var. glaucus (Eastern sweetshrub).